The chain runs to 216 residues: Thiosulfate dehydrogenase electron acceptor (216 aa).

Residues 1–22 (MKSIHWPLAGVAALLLSMQAQA) form the signal peptide. Cytochrome c domains lie at 23–108 (ADGQ…EAMP) and 118–210 (SEAA…ANVG). Residues Cys-41, Cys-44, His-45, Cys-141, Cys-144, and His-145 each contribute to the heme c site.

Binds 2 heme c groups covalently per subunit.

Functionally, acts as an electron acceptor for the thiosulfate dehydrogenase TsdA. The polypeptide is Thiosulfate dehydrogenase electron acceptor (tsdB) (Stutzerimonas stutzeri (strain A1501) (Pseudomonas stutzeri)).